The following is a 401-amino-acid chain: Argininosuccinate synthase (401 aa).

9–17 is an ATP binding site; that stretch reads AYSGGLDTS. Position 86 (Tyr86) interacts with L-citrulline. Gly116 is a binding site for ATP. Positions 118, 122, and 123 each coordinate L-aspartate. Residue Asn122 participates in L-citrulline binding. Residues Arg126, Ser174, Ser183, Glu259, and Tyr271 each contribute to the L-citrulline site.

Belongs to the argininosuccinate synthase family. Type 1 subfamily. Homotetramer.

The protein localises to the cytoplasm. The enzyme catalyses L-citrulline + L-aspartate + ATP = 2-(N(omega)-L-arginino)succinate + AMP + diphosphate + H(+). The protein operates within amino-acid biosynthesis; L-arginine biosynthesis; L-arginine from L-ornithine and carbamoyl phosphate: step 2/3. The polypeptide is Argininosuccinate synthase (Bacillus mycoides (strain KBAB4) (Bacillus weihenstephanensis)).